The primary structure comprises 289 residues: Nucleotide-binding protein COPRO5265_0725 (289 aa).

9-16 (GLSGAGKS) contributes to the ATP binding site. 59-62 (DSRS) is a binding site for GTP.

This sequence belongs to the RapZ-like family.

Displays ATPase and GTPase activities. This Coprothermobacter proteolyticus (strain ATCC 35245 / DSM 5265 / OCM 4 / BT) protein is Nucleotide-binding protein COPRO5265_0725.